Here is a 362-residue protein sequence, read N- to C-terminus: tRNA/tmRNA (uracil-C(5))-methyltransferase (362 aa).

Positions 186, 214, 219, 235, and 295 each coordinate S-adenosyl-L-methionine. The active-site Nucleophile is cysteine 320. The active-site Proton acceptor is the glutamate 354.

Belongs to the class I-like SAM-binding methyltransferase superfamily. RNA M5U methyltransferase family. TrmA subfamily.

It carries out the reaction uridine(54) in tRNA + S-adenosyl-L-methionine = 5-methyluridine(54) in tRNA + S-adenosyl-L-homocysteine + H(+). The enzyme catalyses uridine(341) in tmRNA + S-adenosyl-L-methionine = 5-methyluridine(341) in tmRNA + S-adenosyl-L-homocysteine + H(+). In terms of biological role, dual-specificity methyltransferase that catalyzes the formation of 5-methyluridine at position 54 (m5U54) in all tRNAs, and that of position 341 (m5U341) in tmRNA (transfer-mRNA). The polypeptide is tRNA/tmRNA (uracil-C(5))-methyltransferase (Ectopseudomonas mendocina (strain ymp) (Pseudomonas mendocina)).